Reading from the N-terminus, the 159-residue chain is MKIKLVTVGKLKEKYLKDGIAEYMKRLNRFCKVEMIELANEKTPDKASDLENQQILEKEGNKILAKINEREFVIALAIEGNQFPSEKFSQLMMDTTVHGFSDITFVIGGSLGLYPAVKKRANLLMSFGKLTLPHQLMRLVLIEQIYRAFMIQQGSPYHK.

S-adenosyl-L-methionine is bound by residues Leu76, Gly108, and 127–132; that span reads FGKLTL.

The protein belongs to the RNA methyltransferase RlmH family. In terms of assembly, homodimer.

The protein localises to the cytoplasm. It catalyses the reaction pseudouridine(1915) in 23S rRNA + S-adenosyl-L-methionine = N(3)-methylpseudouridine(1915) in 23S rRNA + S-adenosyl-L-homocysteine + H(+). Functionally, specifically methylates the pseudouridine at position 1915 (m3Psi1915) in 23S rRNA. This Streptococcus sanguinis (strain SK36) protein is Ribosomal RNA large subunit methyltransferase H.